The primary structure comprises 504 residues: DNA-binding protein reb1 (504 aa).

The interval 30 to 51 (DFDDFPLNKGLKTNNNDYSGSI) is disordered. 2 consecutive HTH myb-type domains span residues 308 to 361 (NPFE…RFGD) and 362 to 422 (KLKR…KAAS). 2 DNA-binding regions (H-T-H motif) span residues 335–357 (WTKIGRKMARMPNDCRDRWRDVV) and 395–418 (WTLVAQMLGTRTRLQCRYKFQQLT).

It is found in the nucleus. Functionally, DNA-binding protein that recognizes sites within both the enhancer and the promoter of rRNA transcription, as well as upstream of many genes transcribed by RNA polymerase II. Has a role in the termination of RNA polymerase I catalyzed transcription. The chain is DNA-binding protein reb1 (reb1) from Schizosaccharomyces pombe (strain 972 / ATCC 24843) (Fission yeast).